The following is a 122-amino-acid chain: Vitelline membrane protein Vm32E (122 aa).

A signal peptide spans 1 to 19 (MKTVAFLAVVVLFAAFACA). Residues 40-79 (SVPAPPCPKNYLFSCQPNLVPAPCAQQAAPAAYGSAGAYT) form the VM domain.

The protein belongs to the vitelline membrane family.

The protein localises to the secreted. In terms of biological role, major early eggshell protein. This chain is Vitelline membrane protein Vm32E, found in Drosophila persimilis (Fruit fly).